We begin with the raw amino-acid sequence, 196 residues long: Pyridoxal 5'-phosphate synthase subunit PdxT (196 aa).

An L-glutamine-binding site is contributed by 46–48 (GES). Cys-78 (nucleophile) is an active-site residue. L-glutamine-binding positions include Arg-110 and 138–139 (IR). Active-site charge relay system residues include His-174 and Glu-176.

Belongs to the glutaminase PdxT/SNO family. In the presence of PdxS, forms a dodecamer of heterodimers. Only shows activity in the heterodimer.

It catalyses the reaction aldehydo-D-ribose 5-phosphate + D-glyceraldehyde 3-phosphate + L-glutamine = pyridoxal 5'-phosphate + L-glutamate + phosphate + 3 H2O + H(+). The enzyme catalyses L-glutamine + H2O = L-glutamate + NH4(+). Its pathway is cofactor biosynthesis; pyridoxal 5'-phosphate biosynthesis. Its function is as follows. Catalyzes the hydrolysis of glutamine to glutamate and ammonia as part of the biosynthesis of pyridoxal 5'-phosphate. The resulting ammonia molecule is channeled to the active site of PdxS. This is Pyridoxal 5'-phosphate synthase subunit PdxT from Deinococcus radiodurans (strain ATCC 13939 / DSM 20539 / JCM 16871 / CCUG 27074 / LMG 4051 / NBRC 15346 / NCIMB 9279 / VKM B-1422 / R1).